A 483-amino-acid chain; its full sequence is Spore germination protein B1 (483 aa).

5 helical membrane passes run 289–309 (ILIT…HTGL), 323–343 (LNVP…IELI), 353–373 (PIGQ…AVQA), 375–395 (IVSA…FTVP), and 410–430 (VMIS…LFVI).

This sequence belongs to the GerABKA family.

The protein localises to the cell membrane. Its function is as follows. Involved in the response to the germinative mixture of L-asparagine, glucose, fructose and potassium ions (AGFK). Cannot stimulate germination in the absence of gerD and gerK gene products (fructose and glucose receptors respectively). The chain is Spore germination protein B1 (gerBA) from Bacillus subtilis (strain 168).